A 250-amino-acid polypeptide reads, in one-letter code: Osmotin-like protein OSML15 (250 aa).

Positions 1-21 (MSHLTTCLVFFLLAFVTYTNA) are cleaved as a signal peptide. 8 cysteine pairs are disulfide-bonded: Cys-31–Cys-226, Cys-73–Cys-83, Cys-88–Cys-94, Cys-142–Cys-214, Cys-147–Cys-197, Cys-155–Cys-165, Cys-169–Cys-178, and Cys-179–Cys-184.

It belongs to the thaumatin family.

This Solanum commersonii (Commerson's wild potato) protein is Osmotin-like protein OSML15.